We begin with the raw amino-acid sequence, 788 residues long: Integrin beta-6 (788 aa).

The first 21 residues, 1–21 (MGIELLCLFFLCLGRNDHVQG), serve as a signal peptide directing secretion. The 50-residue stretch at 22-71 (GCAVGGAETCEDCLLIGPQCAWCSQENFTHLSGVGERCDTPANLLAKGCQ) folds into the PSI domain. The Extracellular portion of the chain corresponds to 22-709 (GCAVGGAETC…KDCPKPPNIP (688 aa)). 19 disulfide bridges follow: C23-C41, C31-C454, C34-C59, C44-C70, C197-C204, C252-C293, C394-C406, C426-C452, C456-C476, C467-C479, C481-C490, C492-C519, C502-C517, C511-C522, C524-C537, C539-C560, C544-C558, C552-C563, and C565-C574. N-linked (GlcNAc...) asparagine glycosylation is found at N48 and N97. The 241-residue stretch at 131–371 (YPVDLYYLMD…QLIISAYEEL (241 aa)) folds into the VWFA domain. Positions 140, 142, and 144 each coordinate Mg(2+). Ca(2+) is bound by residues S144, D147, D148, and E179. Ca(2+) contacts are provided by N235, D237, P239, and E240. E240 contacts Mg(2+). N260 carries N-linked (GlcNAc...) asparagine glycosylation. Ca(2+) contacts are provided by D271 and K355. The N-linked (GlcNAc...) asparagine glycan is linked to N387. N418 carries an N-linked (GlcNAc...) asparagine glycan. I-EGF domains are found at residues 456–491 (CQKE…HHCE), 492–538 (CGED…PYCQ), 539–575 (CDNF…EYCN), and 576–615 (CTTS…PTCE). Residues N463 and N471 are each glycosylated (N-linked (GlcNAc...) asparagine). Residue N541 is glycosylated (N-linked (GlcNAc...) asparagine). A glycan (N-linked (GlcNAc...) asparagine) is linked at N575. Cystine bridges form between C576–C599, C583–C597, C591–C602, C604–C614, C617–C620, C624–C670, C630–C649, C633–C645, and C678–C702. Residues 710-730 (MIMLGVSLAILLIGVVLLCIW) traverse the membrane as a helical segment. Residues 731–758 (KLLVSFHDRKEVAKFEAERSKAKWQTGT) are interaction with HAX1. Residues 731–788 (KLLVSFHDRKEVAKFEAERSKAKWQTGTNPLYRGSTSTFKNVTYKHKEKQKVDLSTDG) lie on the Cytoplasmic side of the membrane.

The protein belongs to the integrin beta chain family. Heterodimer of an alpha and a beta subunit. Interacts with FLNB. Interacts with HAX1. ITGAV:ITGB6 interacts with FBN1. ITGAV:ITGB6 interacts with TGFB1.

Its subcellular location is the cell membrane. It is found in the cell junction. The protein localises to the focal adhesion. Functionally, integrin alpha-V:beta-6 (ITGAV:ITGB6) is a receptor for fibronectin and cytotactin. It recognizes the sequence R-G-D in its ligands. ITGAV:ITGB6 acts as a receptor for fibrillin-1 (FBN1) and mediates R-G-D-dependent cell adhesion to FBN1. Integrin alpha-V:beta-6 (ITGAV:ITGB6) mediates R-G-D-dependent release of transforming growth factor beta-1 (TGF-beta-1) from regulatory Latency-associated peptide (LAP), thereby playing a key role in TGF-beta-1 activation. The protein is Integrin beta-6 (ITGB6) of Bos taurus (Bovine).